The primary structure comprises 152 residues: Ribosome maturation factor RimP (152 aa).

Belongs to the RimP family.

It is found in the cytoplasm. Its function is as follows. Required for maturation of 30S ribosomal subunits. This Elusimicrobium minutum (strain Pei191) protein is Ribosome maturation factor RimP.